The chain runs to 545 residues: Light-independent protochlorophyllide reductase subunit N (545 aa).

Residues C102, C127, and C187 each coordinate [4Fe-4S] cluster.

The protein belongs to the BchN/ChlN family. Protochlorophyllide reductase is composed of three subunits; ChlL, ChlN and ChlB. Forms a heterotetramer of two ChlB and two ChlN subunits. It depends on [4Fe-4S] cluster as a cofactor.

The protein localises to the plastid. It is found in the chloroplast. The catalysed reaction is chlorophyllide a + oxidized 2[4Fe-4S]-[ferredoxin] + 2 ADP + 2 phosphate = protochlorophyllide a + reduced 2[4Fe-4S]-[ferredoxin] + 2 ATP + 2 H2O. It functions in the pathway porphyrin-containing compound metabolism; chlorophyll biosynthesis (light-independent). Functionally, component of the dark-operative protochlorophyllide reductase (DPOR) that uses Mg-ATP and reduced ferredoxin to reduce ring D of protochlorophyllide (Pchlide) to form chlorophyllide a (Chlide). This reaction is light-independent. The NB-protein (ChlN-ChlB) is the catalytic component of the complex. This Chlamydomonas reinhardtii (Chlamydomonas smithii) protein is Light-independent protochlorophyllide reductase subunit N.